The primary structure comprises 283 residues: MKILLIIGSTGVGKTDLSINYSKKYNAPVVVLDRIQCFPELSITSGRPDESEYFGSKRIYLTDLLVEPGNENIKKTFYVNKLINILNEIKNNYDTQNLPNEKGYGCIFEGGSISLLKELLTKINKLPYKITCVIYIRPSDSIDNHKLYKAKIFKRVSQMLFPTEEGNDSQILEVKRILNKGKTVNAQGEINLEYYEKIKQVLISLVGLVGIEDVIHFLDKQYDQKNITSKLDPNYLNEIQSQLIETITLAHYNYALSQIELIDSLIKQLPKSIEYCLKNIEIN.

The protein belongs to the isopentenyl transferase family.

The enzyme catalyses dimethylallyl diphosphate + AMP = N(6)-(dimethylallyl)adenosine 5'-phosphate + diphosphate. In terms of biological role, transfers dimethylallyl groups to AMP as part of the biosynthesis of cytokinin phytohormones like isopentenyl adenine or discadenine which controle spore formation and viability. The chain is Adenylate dimethylallyltransferase (iptA) from Dictyostelium discoideum (Social amoeba).